We begin with the raw amino-acid sequence, 246 residues long: Large ribosomal subunit protein uL3 (246 aa).

Residues 140–162 (SHRSIGSTGGRQDPGKTFKNKKM) form a disordered region. Gln-151 carries the post-translational modification N5-methylglutamine.

The protein belongs to the universal ribosomal protein uL3 family. In terms of assembly, part of the 50S ribosomal subunit. Forms a cluster with proteins L14 and L19. Post-translationally, methylated by PrmB.

In terms of biological role, one of the primary rRNA binding proteins, it binds directly near the 3'-end of the 23S rRNA, where it nucleates assembly of the 50S subunit. This Methylobacterium sp. (strain 4-46) protein is Large ribosomal subunit protein uL3.